A 216-amino-acid polypeptide reads, in one-letter code: Peptide methionine sulfoxide reductase MsrA (216 aa).

C54 is an active-site residue.

It belongs to the MsrA Met sulfoxide reductase family.

The enzyme catalyses L-methionyl-[protein] + [thioredoxin]-disulfide + H2O = L-methionyl-(S)-S-oxide-[protein] + [thioredoxin]-dithiol. It carries out the reaction [thioredoxin]-disulfide + L-methionine + H2O = L-methionine (S)-S-oxide + [thioredoxin]-dithiol. Its function is as follows. Has an important function as a repair enzyme for proteins that have been inactivated by oxidation. Catalyzes the reversible oxidation-reduction of methionine sulfoxide in proteins to methionine. This Xanthomonas campestris pv. campestris (strain 8004) protein is Peptide methionine sulfoxide reductase MsrA.